The primary structure comprises 249 residues: Proline-rich antigen (249 aa).

Composition is skewed to pro residues over residues 1-20 (MTDQ…PPPG) and 38-87 (YPPP…PPGP). The segment at 1–87 (MTDQPPPSGS…GAYAPPPPGP (87 aa)) is disordered. One copy of the 1-1; approximate repeat lies at 34–43 (LGSAYPPPTA). Positions 34-85 (LGSAYPPPTAPPVGGSYPPPPPPGGSYPPPPPPGGSYPPPPPSTGAYAPPPP) are 5 X 10 AA tandem repeats of [PV]-G-G-S-Y-P-P-P-P-P. Tandem repeats lie at residues 46–55 (VGGSYPPPPP), 56–65 (PGGSYPPPPP), and 66–75 (PGGSYPPPPP). The 1-5; approximate repeat unit spans residues 76-85 (STGAYAPPPP). The region spanning 99–242 (FWVTRVLAYV…KRQTLADKIM (144 aa)) is the RDD domain. 2 tandem repeats follow at residues 101 to 123 (VTRV…IGML) and 134 to 156 (VTDI…IGML). Residues 101 to 156 (VTRVLAYVIDNIPATVLLGIGMLIQTLTKQEACVTDITQYNVNQYCATQPTGIGML) form a 2 X 23 AA approximate repeats region. Helical transmembrane passes span 104–124 (VLAY…GMLI), 151–171 (TGIG…YLVW), and 212–232 (LAHF…LWDS).

Belongs to the mycobacterial Pra family.

Its subcellular location is the cell membrane. This is Proline-rich antigen (ag36) from Mycobacterium leprae (strain TN).